The primary structure comprises 104 residues: Urease subunit beta (104 aa).

It belongs to the urease beta subunit family. Heterotrimer of UreA (gamma), UreB (beta) and UreC (alpha) subunits. Three heterotrimers associate to form the active enzyme.

It localises to the cytoplasm. The enzyme catalyses urea + 2 H2O + H(+) = hydrogencarbonate + 2 NH4(+). Its pathway is nitrogen metabolism; urea degradation; CO(2) and NH(3) from urea (urease route): step 1/1. The sequence is that of Urease subunit beta from Rhodopseudomonas palustris (strain BisB18).